The chain runs to 277 residues: 4-deoxy-L-threo-5-hexosulose-uronate ketol-isomerase (277 aa).

Positions 195, 197, 202, and 244 each coordinate Zn(2+).

The protein belongs to the KduI family. Requires Zn(2+) as cofactor.

It carries out the reaction 5-dehydro-4-deoxy-D-glucuronate = 3-deoxy-D-glycero-2,5-hexodiulosonate. Its pathway is glycan metabolism; pectin degradation; 2-dehydro-3-deoxy-D-gluconate from pectin: step 4/5. In terms of biological role, catalyzes the isomerization of 5-dehydro-4-deoxy-D-glucuronate to 3-deoxy-D-glycero-2,5-hexodiulosonate. This chain is 4-deoxy-L-threo-5-hexosulose-uronate ketol-isomerase, found in Oceanobacillus iheyensis (strain DSM 14371 / CIP 107618 / JCM 11309 / KCTC 3954 / HTE831).